Reading from the N-terminus, the 552-residue chain is Glutamine--tRNA ligase (552 aa).

Positions 34–44 match the 'HIGH' region motif; it reads PEPNGYLHIGH. ATP contacts are provided by residues 35–37 and 41–47; these read EPN and HIGHAKS. 2 residues coordinate L-glutamine: Asp-67 and Tyr-212. ATP contacts are provided by residues Thr-231, 261–262, and 269–271; these read RL and MSK. The 'KMSKS' region signature appears at 268-272; sequence VMSKR.

The protein belongs to the class-I aminoacyl-tRNA synthetase family. In terms of assembly, monomer.

The protein localises to the cytoplasm. The catalysed reaction is tRNA(Gln) + L-glutamine + ATP = L-glutaminyl-tRNA(Gln) + AMP + diphosphate. In Aliivibrio fischeri (strain MJ11) (Vibrio fischeri), this protein is Glutamine--tRNA ligase.